The sequence spans 937 residues: FNIP repeat-containing protein DDB_G0271996 (937 aa).

Polar residues predominate over residues 1-12; it reads MQQPISIQQPVV. The disordered stretch occupies residues 1 to 60; that stretch reads MQQPISIQQPVVNNINNSPNNQANINNNTTNNTNNNNNNNNTTNNIANNNNSNNINNNNE. Residues 13–60 show a composition bias toward low complexity; the sequence is NNINNSPNNQANINNNTTNNTNNNNNNNNTTNNIANNNNSNNINNNNE. FNIP repeat units follow at residues 307 to 350, 354 to 394, 396 to 439, and 598 to 640; these read FNQP…LGQR, PIPI…TLDN, FNQP…FHQN, and YNHQ…RVKS. The stretch at 677–769 forms a coiled coil; sequence VEQQAQYAQQ…EEEDTNNHQH (93 aa). The segment covering 719–729 has biased composition (low complexity); it reads KQQQQQQQDNE. Disordered stretches follow at residues 719–767, 794–823, and 910–937; these read KQQQ…TNNH, SNNSNNYNYNNNSNNNNNNNSNEEDDEEED, and QNQNNNNYNNNNNNNNNNNNNKKKNVKK. A compositionally biased stretch (acidic residues) spans 751–763; sequence LEEEQENEEEEED. Low complexity-rich tracts occupy residues 794–814 and 910–929; these read SNNSNNYNYNNNSNNNNNNNS and QNQNNNNYNNNNNNNNNNNN. The stretch at 902–937 forms a coiled coil; the sequence is ICNNINQNQNQNNNNYNNNNNNNNNNNNNKKKNVKK.

The sequence is that of FNIP repeat-containing protein DDB_G0271996 from Dictyostelium discoideum (Social amoeba).